Consider the following 594-residue polypeptide: UvrABC system protein C (594 aa).

The region spanning 13-99 (NSSGVYQYFD…IKQLKPKYNI (87 aa)) is the GIY-YIG domain. The 36-residue stretch at 205 to 240 (DRLIKELELKMERLSSNLRFEEALIYRDRIAKIQKI) folds into the UVR domain.

It belongs to the UvrC family. Interacts with UvrB in an incision complex.

Its subcellular location is the cytoplasm. Its function is as follows. The UvrABC repair system catalyzes the recognition and processing of DNA lesions. UvrC both incises the 5' and 3' sides of the lesion. The N-terminal half is responsible for the 3' incision and the C-terminal half is responsible for the 5' incision. This chain is UvrABC system protein C, found in Helicobacter pylori (strain G27).